We begin with the raw amino-acid sequence, 208 residues long: Small ribosomal subunit protein uS4 (208 aa).

The S4 RNA-binding domain occupies 98-161; sequence RRLDNVIYRM…KELEIIKESL (64 aa).

The protein belongs to the universal ribosomal protein uS4 family. Part of the 30S ribosomal subunit. Contacts protein S5. The interaction surface between S4 and S5 is involved in control of translational fidelity.

Functionally, one of the primary rRNA binding proteins, it binds directly to 16S rRNA where it nucleates assembly of the body of the 30S subunit. In terms of biological role, with S5 and S12 plays an important role in translational accuracy. This is Small ribosomal subunit protein uS4 from Thermodesulfovibrio yellowstonii (strain ATCC 51303 / DSM 11347 / YP87).